Reading from the N-terminus, the 466-residue chain is Asparagine--tRNA ligase (466 aa).

Belongs to the class-II aminoacyl-tRNA synthetase family. Homodimer.

The protein resides in the cytoplasm. It catalyses the reaction tRNA(Asn) + L-asparagine + ATP = L-asparaginyl-tRNA(Asn) + AMP + diphosphate + H(+). The chain is Asparagine--tRNA ligase from Yersinia pseudotuberculosis serotype O:1b (strain IP 31758).